A 337-amino-acid polypeptide reads, in one-letter code: Terpene synthase 4 (337 aa).

Mg(2+) is bound by residues Asp94 and Asp98. The short motif at 94–98 (DDIFD) is the D(D/E)XX(D/E) motif element. Arg195 is a binding site for substrate. Residues Asn241, Ser245, and Glu249 each coordinate Mg(2+). Positions 241-249 (NDIYSYHRE) match the NSE motif motif. Positions 320-327 (WSESCTRY) match the WxxxxxRY motif motif.

It belongs to the terpene synthase family. Requires Mg(2+) as cofactor.

The catalysed reaction is (2E,6E)-farnesyl diphosphate = alpha-muurolene + diphosphate. The enzyme catalyses (2E,6E)-farnesyl diphosphate = (-)-(E)-beta-caryophyllene + diphosphate. Functionally, terpene synthase that catalyzes the cyclization of farnesyl diphosphate (FPP) into alpha-muurolene, (-)-beta-caryophyllene, and one unidentified sesquiterpene. TPS4 shows only trace monoterpene synthase activity with geranyl diphosphate (GPP) as substrate and produces very small amounts of myrcene. P.polycephalum has a unique biology and these volatile terpenoids could function in internal communication of P.polycephalum, to mark the territory that have been explored, or they may be involved in chemotaxis. This chain is Terpene synthase 4, found in Physarum polycephalum (Slime mold).